We begin with the raw amino-acid sequence, 245 residues long: Proteasome subunit alpha type-7-1B (245 aa).

The protein belongs to the peptidase T1A family. As to quaternary structure, the 26S proteasome consists of a 20S proteasome core and two 19S regulatory subunits. The 20S proteasome core is composed of 28 subunits that are arranged in four stacked rings, resulting in a barrel-shaped structure. The two end rings are each formed by seven alpha subunits, and the two central rings are each formed by seven beta subunits. The catalytic chamber with the active sites is on the inside of the barrel. As to expression, testis specific.

The protein resides in the cytoplasm. It is found in the nucleus. Functionally, the proteasome is a multicatalytic proteinase complex which is characterized by its ability to cleave peptides with Arg, Phe, Tyr, Leu, and Glu adjacent to the leaving group at neutral or slightly basic pH. The proteasome has an ATP-dependent proteolytic activity. This is Proteasome subunit alpha type-7-1B (Pros28.1B) from Drosophila virilis (Fruit fly).